We begin with the raw amino-acid sequence, 635 residues long: CCR4-NOT transcription complex subunit 10 (635 aa).

At T45 the chain carries Phosphothreonine. Residues 131–165 are a coiled coil; it reads LVARLEALEKAMAALVATLQLQLLLATNQLNRAEA. Disordered regions lie at residues 396 to 416 and 450 to 474; these read EERQ…QSAG and SEDV…DNNF. Residues 456–470 show a composition bias toward basic and acidic residues; the sequence is PEPKDPTQESWRHPQ.

Belongs to the CNOT10 family. In terms of assembly, component of the CCR4-NOT complex. CNOT10 and CNOT11 form a subcomplex docked to the CNOT1 scaffold.

It localises to the cytoplasm. The protein localises to the nucleus. In terms of biological role, component of the CCR4-NOT complex which is one of the major cellular mRNA deadenylases and is linked to various cellular processes including bulk mRNA degradation, miRNA-mediated repression, translational repression during translational initiation and general transcription regulation. Additional complex functions may be a consequence of its influence on mRNA expression. Is not required for association of CNOT7 to the CCR4-NOT complex. The chain is CCR4-NOT transcription complex subunit 10 (Not10) from Drosophila melanogaster (Fruit fly).